The primary structure comprises 351 residues: MVSFSEITTLGVGGSIACFIECSPDEFVERAPGLFRPGHHVLVVGGGSNLVASDCPFPGTVVRLKSRDTIVSDDGDYTRFSISAGTSWDDLVSYSLDLGFDQLSPMSGIPGTFGGALAQNISAYGAAVRDVLGSVEVYDACTSEVVTFGLEDMRYGYRTSALKNVRNKVILGGTLLLKPGPTPVLHRQLANALKVDLGTYCSGKQVRDQVLRIRAEKGMLPRYLVPKGFDVCNTSSVGSFFVNPIVSKEHLSRLRRLVPQGALNSSVIQTDEMGGVKVSAAFLLEQSGFEKGFCISGSQAAISTQHSLAIVNRGGATAAEVIELAGLITRTVSRKFDIHLIPEPVFVGLEL.

The 203-residue stretch at 11–213 (GVGGSIACFI…KQVRDQVLRI (203 aa)) folds into the FAD-binding PCMH-type domain. The active site involves R158. Catalysis depends on S239, which acts as the Proton donor. The active site involves E343.

Belongs to the MurB family. Requires FAD as cofactor.

The protein resides in the cytoplasm. It carries out the reaction UDP-N-acetyl-alpha-D-muramate + NADP(+) = UDP-N-acetyl-3-O-(1-carboxyvinyl)-alpha-D-glucosamine + NADPH + H(+). It functions in the pathway cell wall biogenesis; peptidoglycan biosynthesis. Cell wall formation. The chain is UDP-N-acetylenolpyruvoylglucosamine reductase from Tropheryma whipplei (strain Twist) (Whipple's bacillus).